Reading from the N-terminus, the 418-residue chain is 4-hydroxy-3-methylbut-2-en-1-yl diphosphate synthase (flavodoxin) (418 aa).

[4Fe-4S] cluster contacts are provided by Cys-305, Cys-308, Cys-351, and Glu-358.

This sequence belongs to the IspG family. Requires [4Fe-4S] cluster as cofactor.

It carries out the reaction (2E)-4-hydroxy-3-methylbut-2-enyl diphosphate + oxidized [flavodoxin] + H2O + 2 H(+) = 2-C-methyl-D-erythritol 2,4-cyclic diphosphate + reduced [flavodoxin]. It functions in the pathway isoprenoid biosynthesis; isopentenyl diphosphate biosynthesis via DXP pathway; isopentenyl diphosphate from 1-deoxy-D-xylulose 5-phosphate: step 5/6. Converts 2C-methyl-D-erythritol 2,4-cyclodiphosphate (ME-2,4cPP) into 1-hydroxy-2-methyl-2-(E)-butenyl 4-diphosphate. This Bartonella bacilliformis (strain ATCC 35685 / KC583 / Herrer 020/F12,63) protein is 4-hydroxy-3-methylbut-2-en-1-yl diphosphate synthase (flavodoxin).